The sequence spans 810 residues: DNA-binding protein REB1 (810 aa).

2 stretches are compositionally biased toward basic and acidic residues: residues 1 to 10 and 29 to 44; these read MPSGHNDKNA and HQNH…LENK. 5 disordered regions span residues 1 to 80, 114 to 161, 180 to 243, 294 to 313, and 346 to 365; these read MPSG…ENIS, NQQD…GVDD, NNNN…TNND, HGLN…LSNS, and QDTQ…AGSV. Composition is skewed to low complexity over residues 51–64 and 124–135; these read IVES…NNND and NNNTDNGNDSNN. Over residues 149-161 the composition is skewed to basic and acidic residues; it reads DKNKKDAGVGVDD. The segment covering 180–191 has biased composition (low complexity); it reads NNNNNNSIANDS. Over residues 198-208 the composition is skewed to basic and acidic residues; sequence HDNGNNHENSQ. Over residues 346 to 355 the composition is skewed to polar residues; sequence QDTQPHQQKS. The residue at position 355 (serine 355) is a Phosphoserine. The 54-residue stretch at 470–523 folds into the HTH myb-type domain; the sequence is HIFEQRGKWTAEEEQELAKLCAEKEGQWAEIGKTLGRMPEDCRDRWRNYVKCGT. The H-T-H motif DNA-binding region spans 497–519; the sequence is WAEIGKTLGRMPEDCRDRWRNYV. The tract at residues 572–667 is disordered; that stretch reads QNDHRNNDED…STHSKSLSNT (96 aa). Over residues 586-606 the composition is skewed to low complexity; sequence ASAAAAAAAAIQEQQQLLQQK. Residues 627–636 show a composition bias toward basic and acidic residues; it reads DNKDEDKPHD. The span at 643-667 shows a compositional bias: polar residues; sequence DDNSQNSMVPAPSATSTHSKSLSNT. The 26-residue stretch at 692-717 folds into the Myb-like domain; that stretch reads NWTIVSERMGGTRSRIQCRYKWNKLV. Residue lysine 807 forms a Glycyl lysine isopeptide (Lys-Gly) (interchain with G-Cter in SUMO) linkage.

It is found in the nucleus. DNA-binding protein that recognizes sites within both the enhancer and the promoter of rRNA transcription, as well as upstream of many genes transcribed by RNA polymerase II. It is essential for cell growth. May stimulate or inhibit transcription. Specifically recognizes the sequence 5'-CCGGGTA-3' or 5'-CGGGTRR-3' (where R is any purine). A member of the general regulatory factors (GRFs) which act as genome partitioners. Acts as a chromatin insulator which are known as STARs (Subtelomeric anti-silencing region). STARs prevent negative or positive transcription influence by extending across chromatin to a promoter. The sequence is that of DNA-binding protein REB1 (REB1) from Saccharomyces cerevisiae (strain ATCC 204508 / S288c) (Baker's yeast).